The chain runs to 426 residues: D-tagatose-1,6-bisphosphate aldolase subunit KbaZ (426 aa).

The protein belongs to the GatZ/KbaZ family. KbaZ subfamily. In terms of assembly, forms a complex with KbaY.

Its pathway is carbohydrate metabolism; D-tagatose 6-phosphate degradation; D-glyceraldehyde 3-phosphate and glycerone phosphate from D-tagatose 6-phosphate: step 2/2. In terms of biological role, component of the tagatose-1,6-bisphosphate aldolase KbaYZ that is required for full activity and stability of the Y subunit. Could have a chaperone-like function for the proper and stable folding of KbaY. When expressed alone, KbaZ does not show any aldolase activity. This Escherichia coli O6:H1 (strain CFT073 / ATCC 700928 / UPEC) protein is D-tagatose-1,6-bisphosphate aldolase subunit KbaZ.